The chain runs to 254 residues: Dihydroorotate dehydrogenase B (NAD(+)), electron transfer subunit (254 aa).

Residues 1–99 (MLQTEMKVIQ…LGPLGKGFDI (99 aa)) form the FAD-binding FR-type domain. FAD contacts are provided by residues 50–53 (RPIS), 67–69 (LYR), and 74–75 (GT). Residues Cys-218, Cys-223, Cys-226, and Cys-241 each contribute to the [2Fe-2S] cluster site.

The protein belongs to the PyrK family. Heterotetramer of 2 PyrK and 2 PyrD type B subunits. It depends on [2Fe-2S] cluster as a cofactor. FAD is required as a cofactor.

It participates in pyrimidine metabolism; UMP biosynthesis via de novo pathway; orotate from (S)-dihydroorotate (NAD(+) route): step 1/1. Functionally, responsible for channeling the electrons from the oxidation of dihydroorotate from the FMN redox center in the PyrD type B subunit to the ultimate electron acceptor NAD(+). The sequence is that of Dihydroorotate dehydrogenase B (NAD(+)), electron transfer subunit from Listeria welshimeri serovar 6b (strain ATCC 35897 / DSM 20650 / CCUG 15529 / CIP 8149 / NCTC 11857 / SLCC 5334 / V8).